Reading from the N-terminus, the 210-residue chain is Large ribosomal subunit protein uL4 (210 aa).

The disordered stretch occupies residues 46–85 (QGTASTLTRSEVRGGGRKPYKQKGTGRARQGSIRTPLRPG). Residues 60–71 (GGRKPYKQKGTG) are compositionally biased toward basic residues.

This sequence belongs to the universal ribosomal protein uL4 family. Part of the 50S ribosomal subunit.

Functionally, one of the primary rRNA binding proteins, this protein initially binds near the 5'-end of the 23S rRNA. It is important during the early stages of 50S assembly. It makes multiple contacts with different domains of the 23S rRNA in the assembled 50S subunit and ribosome. Forms part of the polypeptide exit tunnel. This chain is Large ribosomal subunit protein uL4, found in Prochlorococcus marinus (strain AS9601).